A 104-amino-acid chain; its full sequence is Large ribosomal subunit protein uL24 (104 aa).

Residues Ile-41 to Lys-61 are disordered.

This sequence belongs to the universal ribosomal protein uL24 family. In terms of assembly, part of the 50S ribosomal subunit.

Functionally, one of two assembly initiator proteins, it binds directly to the 5'-end of the 23S rRNA, where it nucleates assembly of the 50S subunit. One of the proteins that surrounds the polypeptide exit tunnel on the outside of the subunit. This is Large ribosomal subunit protein uL24 from Wigglesworthia glossinidia brevipalpis.